Reading from the N-terminus, the 259-residue chain is 5'-nucleotidase SurE (259 aa).

Positions 8, 9, 40, and 92 each coordinate a divalent metal cation.

It belongs to the SurE nucleotidase family. A divalent metal cation is required as a cofactor.

It is found in the cytoplasm. It carries out the reaction a ribonucleoside 5'-phosphate + H2O = a ribonucleoside + phosphate. Functionally, nucleotidase that shows phosphatase activity on nucleoside 5'-monophosphates. The polypeptide is 5'-nucleotidase SurE (Stenotrophomonas maltophilia (strain R551-3)).